The chain runs to 349 residues: Trans-enoyl reductase phmE (349 aa).

An NADP(+)-binding site is contributed by 55–58 (CDWK). Position 143–150 (143–150 (TGIGTMGL)) interacts with substrate. NADP(+)-binding positions include 182-185 (SPKN), Y200, and 247-248 (LE). Position 267–271 (267–271 (GMAIL)) interacts with substrate. Residue 336 to 337 (VS) participates in NADP(+) binding.

It belongs to the zinc-containing alcohol dehydrogenase family. Monomer.

It participates in mycotoxin biosynthesis. In terms of biological role, trans-enoyl reductase; part of the gene cluster that mediates the biosynthesis of the mycotoxins phomacins, leucine-derived cytochalasans with potent actin polymerization-inhibitory activities and monocot-specific antigerminative activities. The first step in the pathway is catalyzed by the hybrid PKS-NRPS phmA, assisted by the enoyl reductase phmE, that are responsible for fusion of the leucine precursor and the polyketide backbone to produce a 2-pyrrolidone intermediate. The polyketide synthase module (PKS) of phmA is responsible for the synthesis of the polyketide backbone and the downstream nonribosomal peptide synthetase (NRPS) amidates the carboxyl end of the polyketide with the leucine precursor. Because phmA lacks a designated enoylreductase (ER) domain, the required activity is provided the enoyl reductase phmE. Reduction by the hydrolyase phmG, followed by dehydration and intra-molecular Diels-Alder cyclization by the Diels-Alderase phmD then yield the required isoindolone-fused macrocycle. A number of oxidative steps catalyzed by the tailoring cytochrome P450 monooxygenase phmB, the FAD-linked oxidoreductase phmC and the short-chain dehydrogenase/reductase phmF, are further required to afford the final products, phomacin D and phomacin E. The sequence is that of Trans-enoyl reductase phmE from Phaeosphaeria nodorum (strain SN15 / ATCC MYA-4574 / FGSC 10173) (Glume blotch fungus).